Here is a 437-residue protein sequence, read N- to C-terminus: Trigger factor (437 aa).

The region spanning 163–248 (GDRVIIDFEG…LNNVSEPTLP (86 aa)) is the PPIase FKBP-type domain.

The protein belongs to the FKBP-type PPIase family. Tig subfamily.

The protein resides in the cytoplasm. It catalyses the reaction [protein]-peptidylproline (omega=180) = [protein]-peptidylproline (omega=0). Its function is as follows. Involved in protein export. Acts as a chaperone by maintaining the newly synthesized protein in an open conformation. Functions as a peptidyl-prolyl cis-trans isomerase. The sequence is that of Trigger factor from Neisseria gonorrhoeae (strain NCCP11945).